Here is a 168-residue protein sequence, read N- to C-terminus: Shikimate kinase (168 aa).

C10–T15 is a binding site for ATP. Position 14 (S14) interacts with Mg(2+). Positions 32, 56, and 78 each coordinate substrate. R116 provides a ligand contact to ATP. R133 contributes to the substrate binding site.

This sequence belongs to the shikimate kinase family. As to quaternary structure, monomer. It depends on Mg(2+) as a cofactor.

It localises to the cytoplasm. It carries out the reaction shikimate + ATP = 3-phosphoshikimate + ADP + H(+). It functions in the pathway metabolic intermediate biosynthesis; chorismate biosynthesis; chorismate from D-erythrose 4-phosphate and phosphoenolpyruvate: step 5/7. Catalyzes the specific phosphorylation of the 3-hydroxyl group of shikimic acid using ATP as a cosubstrate. The protein is Shikimate kinase of Aquifex aeolicus (strain VF5).